We begin with the raw amino-acid sequence, 104 residues long: NADH-quinone oxidoreductase subunit K (104 aa).

Transmembrane regions (helical) follow at residues 4–24 (VPAS…LFGA), 31–51 (VIVL…LVAF), and 67–87 (LFTM…LIAL).

Belongs to the complex I subunit 4L family. NDH-1 is composed of 14 different subunits. Subunits NuoA, H, J, K, L, M, N constitute the membrane sector of the complex.

The protein localises to the cell membrane. The enzyme catalyses a quinone + NADH + 5 H(+)(in) = a quinol + NAD(+) + 4 H(+)(out). NDH-1 shuttles electrons from NADH, via FMN and iron-sulfur (Fe-S) centers, to quinones in the respiratory chain. The immediate electron acceptor for the enzyme in this species is believed to be a menaquinone. Couples the redox reaction to proton translocation (for every two electrons transferred, four hydrogen ions are translocated across the cytoplasmic membrane), and thus conserves the redox energy in a proton gradient. The polypeptide is NADH-quinone oxidoreductase subunit K (Bacillus cereus (strain AH820)).